The primary structure comprises 260 residues: Putative hydro-lyase Dshi_0610 (260 aa).

It belongs to the D-glutamate cyclase family.

This chain is Putative hydro-lyase Dshi_0610, found in Dinoroseobacter shibae (strain DSM 16493 / NCIMB 14021 / DFL 12).